Reading from the N-terminus, the 216-residue chain is Thiamine-phosphate synthase (216 aa).

4-amino-2-methyl-5-(diphosphooxymethyl)pyrimidine-binding positions include 37–41 (QVRSK) and D68. Positions 69 and 93 each coordinate Mg(2+). Residue T112 participates in 4-amino-2-methyl-5-(diphosphooxymethyl)pyrimidine binding. 140–142 (TPT) provides a ligand contact to 2-[(2R,5Z)-2-carboxy-4-methylthiazol-5(2H)-ylidene]ethyl phosphate. K143 serves as a coordination point for 4-amino-2-methyl-5-(diphosphooxymethyl)pyrimidine.

It belongs to the thiamine-phosphate synthase family. Requires Mg(2+) as cofactor.

It carries out the reaction 2-[(2R,5Z)-2-carboxy-4-methylthiazol-5(2H)-ylidene]ethyl phosphate + 4-amino-2-methyl-5-(diphosphooxymethyl)pyrimidine + 2 H(+) = thiamine phosphate + CO2 + diphosphate. The enzyme catalyses 2-(2-carboxy-4-methylthiazol-5-yl)ethyl phosphate + 4-amino-2-methyl-5-(diphosphooxymethyl)pyrimidine + 2 H(+) = thiamine phosphate + CO2 + diphosphate. The catalysed reaction is 4-methyl-5-(2-phosphooxyethyl)-thiazole + 4-amino-2-methyl-5-(diphosphooxymethyl)pyrimidine + H(+) = thiamine phosphate + diphosphate. It functions in the pathway cofactor biosynthesis; thiamine diphosphate biosynthesis; thiamine phosphate from 4-amino-2-methyl-5-diphosphomethylpyrimidine and 4-methyl-5-(2-phosphoethyl)-thiazole: step 1/1. Condenses 4-methyl-5-(beta-hydroxyethyl)thiazole monophosphate (THZ-P) and 2-methyl-4-amino-5-hydroxymethyl pyrimidine pyrophosphate (HMP-PP) to form thiamine monophosphate (TMP). The polypeptide is Thiamine-phosphate synthase (Corynebacterium efficiens (strain DSM 44549 / YS-314 / AJ 12310 / JCM 11189 / NBRC 100395)).